A 307-amino-acid chain; its full sequence is Acetaldehyde dehydrogenase (307 aa).

12–15 (SGNI) is a binding site for NAD(+). The active-site Acyl-thioester intermediate is Cys130. NAD(+)-binding positions include 161–169 (SVGPGTRQN) and Asn272.

This sequence belongs to the acetaldehyde dehydrogenase family.

It catalyses the reaction acetaldehyde + NAD(+) + CoA = acetyl-CoA + NADH + H(+). The sequence is that of Acetaldehyde dehydrogenase from Shewanella pealeana (strain ATCC 700345 / ANG-SQ1).